The primary structure comprises 533 residues: Probable protein kinase UbiB (533 aa).

Residues 24-44 (LILELPMLPWWLRLLGAALPW) traverse the membrane as a helical segment. Residues 126-494 (RFEREPLASA…WKSSRHDWLG (369 aa)) form the Protein kinase domain. ATP is bound by residues 132 to 140 (LASASVAQV) and K154. Catalysis depends on D289, which acts as the Proton acceptor. Residues 510 to 530 (LGQQLEAWPAWVMLAGGVFLI) form a helical membrane-spanning segment.

Belongs to the ABC1 family. UbiB subfamily.

It is found in the cell inner membrane. The protein operates within cofactor biosynthesis; ubiquinone biosynthesis [regulation]. Its function is as follows. Is probably a protein kinase regulator of UbiI activity which is involved in aerobic coenzyme Q (ubiquinone) biosynthesis. This chain is Probable protein kinase UbiB, found in Pseudomonas paraeruginosa (strain DSM 24068 / PA7) (Pseudomonas aeruginosa (strain PA7)).